The following is a 512-amino-acid chain: ATP synthase subunit alpha 1 (512 aa).

Residue 169-176 (GDRQTGKT) coordinates ATP.

Belongs to the ATPase alpha/beta chains family. As to quaternary structure, F-type ATPases have 2 components, CF(1) - the catalytic core - and CF(0) - the membrane proton channel. CF(1) has five subunits: alpha(3), beta(3), gamma(1), delta(1), epsilon(1). CF(0) has four main subunits: a(1), b(1), b'(1) and c(9-12).

Its subcellular location is the cell inner membrane. It carries out the reaction ATP + H2O + 4 H(+)(in) = ADP + phosphate + 5 H(+)(out). Its function is as follows. Produces ATP from ADP in the presence of a proton gradient across the membrane. The alpha chain is a regulatory subunit. The chain is ATP synthase subunit alpha 1 from Cereibacter sphaeroides (strain ATCC 17029 / ATH 2.4.9) (Rhodobacter sphaeroides).